A 571-amino-acid polypeptide reads, in one-letter code: MRTSQYLLATQKETPSDAVVISHQLMLRAGMIRKLASGLYTWLPMGLRVMRKVEAIVREEMNAAGALEVLMPSTQPAELWQESGRWEEYGPELLRFKDRHGRDFCAGPTHEEVITDLARNELSSYKQLPLNLYQIQTKFRDEIRPRFGLMRGREFIMKDAYSFHADQASLQVTYDRMHQAYCNVFTRLGLKFRPVEADNGSIGGAGSHEFHVLAESGEDDIVFSNGSDYAANIEKAEAVPRETSRPAPAEELRLVDTPDTKTIAALVEKFNLPIEKTIKTLIVHAEEPGKLIALIIRGDHELNEIKAANQPGVASPLVMASDAELRDAIGAGAGSLGPLNLPLPIIIDRSVELMSDFGIGANIDDKHYFGVNWERDLPVPTVADLRNVVAGDPSPDGKGTLEIKRGIEVGHIFQLGNKYSKAMKCEVLGENGKPVTLEMGCYGIGVSRVVAAAIEQNNDANGIIWSDTLAPFQIALVPLRYETEQVREATDKLYSELTAAGFEVLLDDRDKKTSPGIKFADMELIGIPHRIVVSDRGLAEGNLEYKSRTEAEAQALPVADVLSFLQARIRR.

It belongs to the class-II aminoacyl-tRNA synthetase family. ProS type 1 subfamily. Homodimer.

The protein localises to the cytoplasm. It carries out the reaction tRNA(Pro) + L-proline + ATP = L-prolyl-tRNA(Pro) + AMP + diphosphate. In terms of biological role, catalyzes the attachment of proline to tRNA(Pro) in a two-step reaction: proline is first activated by ATP to form Pro-AMP and then transferred to the acceptor end of tRNA(Pro). As ProRS can inadvertently accommodate and process non-cognate amino acids such as alanine and cysteine, to avoid such errors it has two additional distinct editing activities against alanine. One activity is designated as 'pretransfer' editing and involves the tRNA(Pro)-independent hydrolysis of activated Ala-AMP. The other activity is designated 'posttransfer' editing and involves deacylation of mischarged Ala-tRNA(Pro). The misacylated Cys-tRNA(Pro) is not edited by ProRS. This is Proline--tRNA ligase from Pseudomonas fluorescens (strain ATCC BAA-477 / NRRL B-23932 / Pf-5).